Consider the following 175-residue polypeptide: Endothelin-2 (175 aa).

The first 21 residues, 1 to 21, serve as a signal peptide directing secretion; that stretch reads MVSAWCSIALALLLALHEGKG. A propeptide spanning residues 22 to 43 is cleaved from the precursor; that stretch reads QAAATLEQPASAPKGRGPHLRF. 2 disulfide bridges follow: Cys46/Cys60 and Cys48/Cys56. Residues 67 to 175 constitute a propeptide that is removed on maturation; the sequence is VNTAGQTAPY…IPAYSRWRKR (109 aa). Positions 93–108 are endothelin-like; that stretch reads CECSTAGDSACATFCH.

The protein belongs to the endothelin/sarafotoxin family.

It localises to the secreted. Functionally, vasoconstrictor. This is Endothelin-2 (Edn2) from Mus musculus (Mouse).